The chain runs to 607 residues: MPRKKPFSVKQKKKQLQDKRERKRGLQDGLRSSSNSRSGSRERREEQTDTSDGESVTHHIRRLNQQPSQGLGPRGYDPNRYRLHFERDSREEVERRKRAAREQVLQPVSAEVLELDIREVYQPGSVLDFPRRPPWSYEMSKEQLMSQEERSFQEYLGKIHGAYTSEKLSYFEHNLETWRQLWRVLEMSDIVLLITDIRHPVVNFPPALYEYVTGELGLALVLVLNKVDLAPPALVVAWKHYFHQCYPQLHIVLFTSFPRDTRTPQEPGGVLKKNRRRGKGWTRALGPEQLLRACEAITVGKVDLSSWREKIARDVAGASWGNVSGEEEEEEDGPAVLVEQLTDSAMEPTGPSRERYKDGVVTIGCIGFPNVGKSSLINGLVGRKVVSVSRTPGHTRYFQTYFLTPSVKLCDCPGLIFPSLLPRQLQVLAGIYPIAQIQEPYTSVGYLASRIPVQALLHLRHPEAEDPSAEHPWCAWDICEAWAEKRGYKTAKAARNDVYRAANSLLRLAVDGRLSLCFYPPGYSEQRGTWESHPETAELVLSQGRVGPAGDEEEEEEEELSSSCEEEGEEDRDADEEGEGDEDTPTSDPGSCLTARNPYALLGEDEC.

Residues 1–14 (MPRKKPFSVKQKKK) are compositionally biased toward basic residues. The disordered stretch occupies residues 1–81 (MPRKKPFSVK…GPRGYDPNRY (81 aa)). Basic and acidic residues predominate over residues 15-26 (QLQDKRERKRGL). S32, S33, and S34 each carry phosphoserine. A phosphothreonine mark is found at T48 and T50. S51 and S68 each carry phosphoserine. The 241-residue stretch at 178–418 (WRQLWRVLEM…LCDCPGLIFP (241 aa)) folds into the CP-type G domain. Position 225-228 (225-228 (NKVD)) interacts with GTP. A Phosphoserine modification is found at S324. GTP contacts are provided by residues 367–374 (GFPNVGKS) and 411–415 (DCPGL). A disordered region spans residues 544-607 (GRVGPAGDEE…PYALLGEDEC (64 aa)). Over residues 550 to 585 (GDEEEEEEEELSSSCEEEGEEDRDADEEGEGDEDTP) the composition is skewed to acidic residues. Phosphoserine is present on residues S561, S562, and S563.

It belongs to the TRAFAC class YlqF/YawG GTPase family.

Its function is as follows. Possible regulatory or functional link with the histocompatibility cluster. The chain is Guanine nucleotide-binding protein-like 1 (Gnl1) from Mus musculus (Mouse).